A 1408-amino-acid chain; its full sequence is DNA-directed RNA polymerase subunit beta' (1408 aa).

Positions 70, 72, 85, and 88 each coordinate Zn(2+). Mg(2+)-binding residues include Asp-460, Asp-462, and Asp-464. Residues Cys-814, Cys-888, Cys-895, and Cys-898 each contribute to the Zn(2+) site.

It belongs to the RNA polymerase beta' chain family. The RNAP catalytic core consists of 2 alpha, 1 beta, 1 beta' and 1 omega subunit. When a sigma factor is associated with the core the holoenzyme is formed, which can initiate transcription. It depends on Mg(2+) as a cofactor. Zn(2+) serves as cofactor.

It catalyses the reaction RNA(n) + a ribonucleoside 5'-triphosphate = RNA(n+1) + diphosphate. DNA-dependent RNA polymerase catalyzes the transcription of DNA into RNA using the four ribonucleoside triphosphates as substrates. In Serratia proteamaculans (strain 568), this protein is DNA-directed RNA polymerase subunit beta'.